Reading from the N-terminus, the 226-residue chain is Leucyl/phenylalanyl-tRNA--protein transferase (226 aa).

It belongs to the L/F-transferase family.

The protein localises to the cytoplasm. The catalysed reaction is N-terminal L-lysyl-[protein] + L-leucyl-tRNA(Leu) = N-terminal L-leucyl-L-lysyl-[protein] + tRNA(Leu) + H(+). The enzyme catalyses N-terminal L-arginyl-[protein] + L-leucyl-tRNA(Leu) = N-terminal L-leucyl-L-arginyl-[protein] + tRNA(Leu) + H(+). It carries out the reaction L-phenylalanyl-tRNA(Phe) + an N-terminal L-alpha-aminoacyl-[protein] = an N-terminal L-phenylalanyl-L-alpha-aminoacyl-[protein] + tRNA(Phe). Its function is as follows. Functions in the N-end rule pathway of protein degradation where it conjugates Leu, Phe and, less efficiently, Met from aminoacyl-tRNAs to the N-termini of proteins containing an N-terminal arginine or lysine. The sequence is that of Leucyl/phenylalanyl-tRNA--protein transferase from Salinibacter ruber (strain DSM 13855 / M31).